The primary structure comprises 216 residues: Thiamine-phosphate synthase (216 aa).

Residues 35 to 39 and asparagine 67 each bind 4-amino-2-methyl-5-(diphosphooxymethyl)pyrimidine; that span reads QLRDK. Residues aspartate 68 and aspartate 87 each coordinate Mg(2+). 4-amino-2-methyl-5-(diphosphooxymethyl)pyrimidine is bound at residue serine 106. 132–134 contacts 2-[(2R,5Z)-2-carboxy-4-methylthiazol-5(2H)-ylidene]ethyl phosphate; it reads TSS. Lysine 135 is a 4-amino-2-methyl-5-(diphosphooxymethyl)pyrimidine binding site. 2-[(2R,5Z)-2-carboxy-4-methylthiazol-5(2H)-ylidene]ethyl phosphate is bound by residues glycine 163 and 183–184; that span reads IS.

The protein belongs to the thiamine-phosphate synthase family. Mg(2+) is required as a cofactor.

It carries out the reaction 2-[(2R,5Z)-2-carboxy-4-methylthiazol-5(2H)-ylidene]ethyl phosphate + 4-amino-2-methyl-5-(diphosphooxymethyl)pyrimidine + 2 H(+) = thiamine phosphate + CO2 + diphosphate. The enzyme catalyses 2-(2-carboxy-4-methylthiazol-5-yl)ethyl phosphate + 4-amino-2-methyl-5-(diphosphooxymethyl)pyrimidine + 2 H(+) = thiamine phosphate + CO2 + diphosphate. The catalysed reaction is 4-methyl-5-(2-phosphooxyethyl)-thiazole + 4-amino-2-methyl-5-(diphosphooxymethyl)pyrimidine + H(+) = thiamine phosphate + diphosphate. Its pathway is cofactor biosynthesis; thiamine diphosphate biosynthesis; thiamine phosphate from 4-amino-2-methyl-5-diphosphomethylpyrimidine and 4-methyl-5-(2-phosphoethyl)-thiazole: step 1/1. In terms of biological role, condenses 4-methyl-5-(beta-hydroxyethyl)thiazole monophosphate (THZ-P) and 2-methyl-4-amino-5-hydroxymethyl pyrimidine pyrophosphate (HMP-PP) to form thiamine monophosphate (TMP). The polypeptide is Thiamine-phosphate synthase (Methanoregula boonei (strain DSM 21154 / JCM 14090 / 6A8)).